An 867-amino-acid chain; its full sequence is Protein translocase subunit SecA (867 aa).

Residues glutamine 86, 104-108 (GEGKT), and aspartate 499 contribute to the ATP site. The Zn(2+) site is built by cysteine 848, cysteine 850, cysteine 859, and histidine 860.

Belongs to the SecA family. As to quaternary structure, monomer and homodimer. Part of the essential Sec protein translocation apparatus which comprises SecA, SecYEG and auxiliary proteins SecDF-YajC and YidC. Zn(2+) serves as cofactor.

It is found in the cell membrane. It localises to the cytoplasm. It catalyses the reaction ATP + H2O + cellular proteinSide 1 = ADP + phosphate + cellular proteinSide 2.. Part of the Sec protein translocase complex. Interacts with the SecYEG preprotein conducting channel. Has a central role in coupling the hydrolysis of ATP to the transfer of proteins into and across the cell membrane, serving both as a receptor for the preprotein-SecB complex and as an ATP-driven molecular motor driving the stepwise translocation of polypeptide chains across the membrane. The protein is Protein translocase subunit SecA of Wolbachia sp. subsp. Brugia malayi (strain TRS).